We begin with the raw amino-acid sequence, 382 residues long: Chorismate synthase (382 aa).

NADP(+)-binding residues include arginine 39 and arginine 45. The disordered stretch occupies residues 89-113; sequence SPEPGGEPRKKALTDARPGHADLTG. The segment covering 94–108 has biased composition (basic and acidic residues); it reads GEPRKKALTDARPGH. FMN is bound by residues 128–130, 246–247, alanine 290, 305–309, and arginine 331; these read RAS, QA, and KPIAT.

It belongs to the chorismate synthase family. Homotetramer. The cofactor is FMNH2.

It carries out the reaction 5-O-(1-carboxyvinyl)-3-phosphoshikimate = chorismate + phosphate. Its pathway is metabolic intermediate biosynthesis; chorismate biosynthesis; chorismate from D-erythrose 4-phosphate and phosphoenolpyruvate: step 7/7. Its function is as follows. Catalyzes the anti-1,4-elimination of the C-3 phosphate and the C-6 proR hydrogen from 5-enolpyruvylshikimate-3-phosphate (EPSP) to yield chorismate, which is the branch point compound that serves as the starting substrate for the three terminal pathways of aromatic amino acid biosynthesis. This reaction introduces a second double bond into the aromatic ring system. The chain is Chorismate synthase from Deinococcus radiodurans (strain ATCC 13939 / DSM 20539 / JCM 16871 / CCUG 27074 / LMG 4051 / NBRC 15346 / NCIMB 9279 / VKM B-1422 / R1).